Consider the following 103-residue polypeptide: Probable protease inhibitor Egf0.4a (103 aa).

The first 22 residues, 1–22 (MMSEKFALVLLVACIAFIGIET), serve as a signal peptide directing secretion. Residues 35–87 (CGENEAYDSMRRGCEKRCDDHNPTFCFKFTTVCWCEKGYVRDKSDTCIKVEDC) form the TIL domain.

Belongs to the polydnaviridae EGF-like motif protein family.

The protein is Probable protease inhibitor Egf0.4a (O4) of Microplitis demolitor (Parasitoid wasp).